We begin with the raw amino-acid sequence, 71 residues long: Small ribosomal subunit protein bS21 (71 aa).

This sequence belongs to the bacterial ribosomal protein bS21 family.

This chain is Small ribosomal subunit protein bS21, found in Buchnera aphidicola subsp. Acyrthosiphon pisum (strain 5A).